The primary structure comprises 276 residues: Small ribosomal subunit protein uS2 (276 aa).

Disordered regions lie at residues 209-233 (AQEA…AADV) and 252-276 (VDWS…SSWE). The span at 211 to 231 (EAAAAAQAAKETAEPTTEGAA) shows a compositional bias: low complexity.

This sequence belongs to the universal ribosomal protein uS2 family. In terms of assembly, component of the small ribosomal subunit. Mature ribosomes consist of a small (40S) and a large (60S) subunit. The 40S subunit contains about 33 different proteins and 1 molecule of RNA (18S). The 60S subunit contains about 49 different proteins and 3 molecules of RNA (25S, 5.8S and 5S). Interacts with RPS21.

It is found in the cytoplasm. Functionally, required for the assembly and/or stability of the 40S ribosomal subunit. Required for the processing of the 20S rRNA-precursor to mature 18S rRNA in a late step of the maturation of 40S ribosomal subunits. This is Small ribosomal subunit protein uS2 from Mycosarcoma maydis (Corn smut fungus).